Here is a 189-residue protein sequence, read N- to C-terminus: Large ribosomal subunit protein uL5 (189 aa).

Belongs to the universal ribosomal protein uL5 family. As to quaternary structure, part of the 50S ribosomal subunit; part of the 5S rRNA/L5/L18/L25 subcomplex. Contacts the 5S rRNA and the P site tRNA. Forms a bridge to the 30S subunit in the 70S ribosome.

In terms of biological role, this is one of the proteins that bind and probably mediate the attachment of the 5S RNA into the large ribosomal subunit, where it forms part of the central protuberance. In the 70S ribosome it contacts protein S13 of the 30S subunit (bridge B1b), connecting the 2 subunits; this bridge is implicated in subunit movement. Contacts the P site tRNA; the 5S rRNA and some of its associated proteins might help stabilize positioning of ribosome-bound tRNAs. In Parafrankia sp. (strain EAN1pec), this protein is Large ribosomal subunit protein uL5.